Consider the following 364-residue polypeptide: Chaperone protein DnaJ 1 (364 aa).

One can recognise a J domain in the interval 7 to 71 (DYYEILGVNR…ERRSEYDAIL (65 aa)). The segment at 124 to 200 (GCEKEIIYSR…CYGRGRVSAQ (77 aa)) adopts a CR-type zinc-finger fold. The Zn(2+) site is built by Cys-137, Cys-140, Cys-154, Cys-157, Cys-174, Cys-177, Cys-188, and Cys-191. CXXCXGXG motif repeat units follow at residues 137–144 (CPVCEGMG), 154–161 (CHACNGEG), 174–181 (CSVCKGKG), and 188–195 (CPTCYGRG).

Belongs to the DnaJ family. Homodimer. Zn(2+) serves as cofactor.

It is found in the cytoplasm. In terms of biological role, participates actively in the response to hyperosmotic and heat shock by preventing the aggregation of stress-denatured proteins and by disaggregating proteins, also in an autonomous, DnaK-independent fashion. Unfolded proteins bind initially to DnaJ; upon interaction with the DnaJ-bound protein, DnaK hydrolyzes its bound ATP, resulting in the formation of a stable complex. GrpE releases ADP from DnaK; ATP binding to DnaK triggers the release of the substrate protein, thus completing the reaction cycle. Several rounds of ATP-dependent interactions between DnaJ, DnaK and GrpE are required for fully efficient folding. Also involved, together with DnaK and GrpE, in the DNA replication of plasmids through activation of initiation proteins. This Aquifex aeolicus (strain VF5) protein is Chaperone protein DnaJ 1.